The chain runs to 338 residues: Adenylosuccinate synthetase (338 aa).

Residues 12–18 and 42–44 contribute to the GTP site; these read GDEGKGK and GHT. The active-site Proton acceptor is D13. Mg(2+)-binding residues include D13 and G42. Residues 13–16, 40–43, T127, R141, Q179, T194, and R256 each bind IMP; these read DEGK and NAGH. Residue H43 is the Proton donor of the active site. Position 252–258 (252–258) interacts with substrate; that stretch reads TVTGRRR. Residues R258, 284-286, and 324-326 each bind GTP; these read CLD and STG.

It belongs to the adenylosuccinate synthetase family. In terms of assembly, homodimer. Mg(2+) serves as cofactor.

It is found in the cytoplasm. The catalysed reaction is IMP + L-aspartate + GTP = N(6)-(1,2-dicarboxyethyl)-AMP + GDP + phosphate + 2 H(+). It participates in purine metabolism; AMP biosynthesis via de novo pathway; AMP from IMP: step 1/2. Its function is as follows. Plays an important role in the de novo pathway of purine nucleotide biosynthesis. Catalyzes the first committed step in the biosynthesis of AMP from IMP. This is Adenylosuccinate synthetase from Methanococcus maripaludis (strain DSM 14266 / JCM 13030 / NBRC 101832 / S2 / LL).